The primary structure comprises 459 residues: Cysteine--tRNA ligase (459 aa).

C28 is a Zn(2+) binding site. The short motif at V30–H40 is the 'HIGH' region element. Zn(2+)-binding residues include C209, H234, and E238. A 'KMSKS' region motif is present at residues K266–S270. K269 serves as a coordination point for ATP.

Belongs to the class-I aminoacyl-tRNA synthetase family. Monomer. Requires Zn(2+) as cofactor.

It localises to the cytoplasm. It carries out the reaction tRNA(Cys) + L-cysteine + ATP = L-cysteinyl-tRNA(Cys) + AMP + diphosphate. This chain is Cysteine--tRNA ligase, found in Histophilus somni (strain 129Pt) (Haemophilus somnus).